The primary structure comprises 104 residues: Large ribosomal subunit protein uL24 (104 aa).

The protein belongs to the universal ribosomal protein uL24 family. As to quaternary structure, part of the 50S ribosomal subunit.

Functionally, one of two assembly initiator proteins, it binds directly to the 5'-end of the 23S rRNA, where it nucleates assembly of the 50S subunit. Its function is as follows. One of the proteins that surrounds the polypeptide exit tunnel on the outside of the subunit. The polypeptide is Large ribosomal subunit protein uL24 (Shewanella woodyi (strain ATCC 51908 / MS32)).